A 60-amino-acid chain; its full sequence is Large ribosomal subunit protein uL30 (60 aa).

It belongs to the universal ribosomal protein uL30 family. Part of the 50S ribosomal subunit.

The chain is Large ribosomal subunit protein uL30 from Ralstonia pickettii (strain 12J).